The primary structure comprises 156 residues: Small ribosomal subunit protein uS7 (156 aa).

This sequence belongs to the universal ribosomal protein uS7 family. Part of the 30S ribosomal subunit. Contacts proteins S9 and S11.

In terms of biological role, one of the primary rRNA binding proteins, it binds directly to 16S rRNA where it nucleates assembly of the head domain of the 30S subunit. Is located at the subunit interface close to the decoding center, probably blocks exit of the E-site tRNA. This chain is Small ribosomal subunit protein uS7, found in Phytoplasma australiense.